The primary structure comprises 329 residues: Tagatose 1,6-diphosphate aldolase 2 (329 aa).

This sequence belongs to the aldolase LacD family.

It carries out the reaction D-tagatofuranose 1,6-bisphosphate = D-glyceraldehyde 3-phosphate + dihydroxyacetone phosphate. Its pathway is carbohydrate metabolism; D-tagatose 6-phosphate degradation; D-glyceraldehyde 3-phosphate and glycerone phosphate from D-tagatose 6-phosphate: step 2/2. The chain is Tagatose 1,6-diphosphate aldolase 2 (lacD2) from Streptococcus mutans serotype c (strain ATCC 700610 / UA159).